The chain runs to 36 residues: Pancreatic polypeptide (36 aa).

A Tyrosine amide modification is found at Tyr-36.

Belongs to the NPY family.

It localises to the secreted. Hormone secreted by pancreatic cells that acts as a regulator of pancreatic and gastrointestinal functions probably by signaling through the G protein-coupled receptor NPY4R2. The chain is Pancreatic polypeptide (PPY) from Erinaceus europaeus (Western European hedgehog).